Reading from the N-terminus, the 372-residue chain is N-methyl-L-tryptophan oxidase (372 aa).

An FAD-binding site is contributed by 4–34 (DLIIIGSGSVGAAAGYYATRAGLKVLMTDAH). Position 307 is an S-8alpha-FAD cysteine (Cys307).

The protein belongs to the MSOX/MTOX family. MTOX subfamily. As to quaternary structure, monomer. FAD is required as a cofactor.

It carries out the reaction N(alpha)-methyl-L-tryptophan + O2 + H2O = L-tryptophan + formaldehyde + H2O2. Its function is as follows. Catalyzes the oxidative demethylation of N-methyl-L-tryptophan. This Salmonella newport (strain SL254) protein is N-methyl-L-tryptophan oxidase.